A 540-amino-acid chain; its full sequence is Chaperonin GroEL (540 aa).

ATP-binding positions include 30–33 (TLGP), lysine 51, 87–91 (DGTTT), glycine 415, 479–481 (NAA), and aspartate 495.

It belongs to the chaperonin (HSP60) family. As to quaternary structure, forms a cylinder of 14 subunits composed of two heptameric rings stacked back-to-back. Interacts with the co-chaperonin GroES.

The protein resides in the cytoplasm. The enzyme catalyses ATP + H2O + a folded polypeptide = ADP + phosphate + an unfolded polypeptide.. Its function is as follows. Together with its co-chaperonin GroES, plays an essential role in assisting protein folding. The GroEL-GroES system forms a nano-cage that allows encapsulation of the non-native substrate proteins and provides a physical environment optimized to promote and accelerate protein folding. The chain is Chaperonin GroEL from Raoultella ornithinolytica (Klebsiella ornithinolytica).